Reading from the N-terminus, the 348-residue chain is Propane 2-monooxygenase, reductase component (348 aa).

The 2Fe-2S ferredoxin-type domain maps to 5-95 (HKINFEPVDI…DCTIELLNFD (91 aa)). 4 residues coordinate [2Fe-2S] cluster: cysteine 39, cysteine 44, cysteine 47, and cysteine 79. The 102-residue stretch at 105-206 (IQDVRTEVLA…TGPYGSFTLK (102 aa)) folds into the FAD-binding FR-type domain.

The protein belongs to the bacterial ring-hydroxylating dioxygenase ferredoxin reductase family. The propane 2-monooxygenase multicomponent enzyme system is composed of an electron transfer component and a monooxygenase component interacting with the effector protein MimD. The electron transfer component is composed of a reductase (MimB), and the monooxygenase component is formed by a large subunit (MimA) and a small subunit (MimC). FAD serves as cofactor. The cofactor is [2Fe-2S] cluster.

Reductase component of the propane 2-monooxygenase multicomponent enzyme system which is involved in the degradation of propane via the O2-dependent hydroxylation of propane. Reductase catalyzes the transfer of electrons from NADH or NADPH to monooxygenase. The chain is Propane 2-monooxygenase, reductase component from Mycolicibacterium goodii (Mycobacterium goodii).